The chain runs to 227 residues: Cytochrome c oxidase subunit 2 (227 aa).

Residues 1 to 14 are Mitochondrial intermembrane-facing; it reads MAYPMQLGFQDATS. The chain crosses the membrane as a helical span at residues 15–45; sequence PIMEELLHFHDHTLMIVFLISSLVLYIISLM. At 46–59 the chain is on the mitochondrial matrix side; sequence LTTKLTHTSTMDAQ. The helical transmembrane segment at 60–87 threads the bilayer; it reads EVETVWTILPAIILIMIALPSLRILYMM. Residues 88–227 lie on the Mitochondrial intermembrane side of the membrane; the sequence is DEINNPSLTV…YFEKWSASML (140 aa). Residues histidine 161, cysteine 196, glutamate 198, cysteine 200, histidine 204, and methionine 207 each contribute to the Cu cation site. Mg(2+) is bound at residue glutamate 198. Residue tyrosine 218 is modified to Phosphotyrosine.

This sequence belongs to the cytochrome c oxidase subunit 2 family. Component of the cytochrome c oxidase (complex IV, CIV), a multisubunit enzyme composed of 14 subunits. The complex is composed of a catalytic core of 3 subunits MT-CO1, MT-CO2 and MT-CO3, encoded in the mitochondrial DNA, and 11 supernumerary subunits COX4I, COX5A, COX5B, COX6A, COX6B, COX6C, COX7A, COX7B, COX7C, COX8 and NDUFA4, which are encoded in the nuclear genome. The complex exists as a monomer or a dimer and forms supercomplexes (SCs) in the inner mitochondrial membrane with NADH-ubiquinone oxidoreductase (complex I, CI) and ubiquinol-cytochrome c oxidoreductase (cytochrome b-c1 complex, complex III, CIII), resulting in different assemblies (supercomplex SCI(1)III(2)IV(1) and megacomplex MCI(2)III(2)IV(2)). Found in a complex with TMEM177, COA6, COX18, COX20, SCO1 and SCO2. Interacts with TMEM177 in a COX20-dependent manner. Interacts with COX20. Interacts with COX16. The cofactor is Cu cation.

The protein localises to the mitochondrion inner membrane. The enzyme catalyses 4 Fe(II)-[cytochrome c] + O2 + 8 H(+)(in) = 4 Fe(III)-[cytochrome c] + 2 H2O + 4 H(+)(out). Component of the cytochrome c oxidase, the last enzyme in the mitochondrial electron transport chain which drives oxidative phosphorylation. The respiratory chain contains 3 multisubunit complexes succinate dehydrogenase (complex II, CII), ubiquinol-cytochrome c oxidoreductase (cytochrome b-c1 complex, complex III, CIII) and cytochrome c oxidase (complex IV, CIV), that cooperate to transfer electrons derived from NADH and succinate to molecular oxygen, creating an electrochemical gradient over the inner membrane that drives transmembrane transport and the ATP synthase. Cytochrome c oxidase is the component of the respiratory chain that catalyzes the reduction of oxygen to water. Electrons originating from reduced cytochrome c in the intermembrane space (IMS) are transferred via the dinuclear copper A center (CU(A)) of subunit 2 and heme A of subunit 1 to the active site in subunit 1, a binuclear center (BNC) formed by heme A3 and copper B (CU(B)). The BNC reduces molecular oxygen to 2 water molecules using 4 electrons from cytochrome c in the IMS and 4 protons from the mitochondrial matrix. This chain is Cytochrome c oxidase subunit 2 (MT-CO2), found in Capra hircus (Goat).